Here is a 682-residue protein sequence, read N- to C-terminus: Probable methyltransferase PMT12 (682 aa).

Residues 1 to 11 lie on the Cytoplasmic side of the membrane; the sequence is MKLFLNSNLLR. A helical; Signal-anchor for type II membrane protein transmembrane segment spans residues 12 to 32; sequence NSIFFKISAFVLISVACFFLG. Over 33–682 the chain is Lumenal; it reads KHWSEDGFRR…KRRKTKGKRA (650 aa). Asparagine 67, asparagine 103, asparagine 125, asparagine 155, asparagine 173, asparagine 193, asparagine 273, asparagine 350, asparagine 395, asparagine 419, asparagine 600, and asparagine 625 each carry an N-linked (GlcNAc...) asparagine glycan.

Belongs to the methyltransferase superfamily.

The protein resides in the golgi apparatus membrane. This chain is Probable methyltransferase PMT12, found in Arabidopsis thaliana (Mouse-ear cress).